The primary structure comprises 235 residues: Small ribosomal subunit protein uS3 (235 aa).

One can recognise a KH type-2 domain in the interval 39–107; that stretch reads VRKFLNKELA…PAQINIAEVK (69 aa). The segment at 215–235 is disordered; sequence AQSEQQPADKPKKAPRGKGRK.

It belongs to the universal ribosomal protein uS3 family. In terms of assembly, part of the 30S ribosomal subunit. Forms a tight complex with proteins S10 and S14.

In terms of biological role, binds the lower part of the 30S subunit head. Binds mRNA in the 70S ribosome, positioning it for translation. The sequence is that of Small ribosomal subunit protein uS3 from Haemophilus influenzae (strain ATCC 51907 / DSM 11121 / KW20 / Rd).